We begin with the raw amino-acid sequence, 445 residues long: Tubulin beta-4 chain (445 aa).

GTP is bound by residues Gln11, Glu69, Ser138, Gly142, Thr143, Gly144, Asn204, and Asn226. Position 69 (Glu69) interacts with Mg(2+). Positions 421 to 445 (EYQQYQDATADEEYDEEEEEERDAE) are disordered. Residues 429 to 445 (TADEEYDEEEEEERDAE) are compositionally biased toward acidic residues.

It belongs to the tubulin family. As to quaternary structure, dimer of alpha and beta chains. A typical microtubule is a hollow water-filled tube with an outer diameter of 25 nm and an inner diameter of 15 nM. Alpha-beta heterodimers associate head-to-tail to form protofilaments running lengthwise along the microtubule wall with the beta-tubulin subunit facing the microtubule plus end conferring a structural polarity. Microtubules usually have 13 protofilaments but different protofilament numbers can be found in some organisms and specialized cells. It depends on Mg(2+) as a cofactor.

Its subcellular location is the cytoplasm. It is found in the cytoskeleton. Its function is as follows. Tubulin is the major constituent of microtubules, a cylinder consisting of laterally associated linear protofilaments composed of alpha- and beta-tubulin heterodimers. Microtubules grow by the addition of GTP-tubulin dimers to the microtubule end, where a stabilizing cap forms. Below the cap, tubulin dimers are in GDP-bound state, owing to GTPase activity of alpha-tubulin. The chain is Tubulin beta-4 chain (TUBB4) from Triticum aestivum (Wheat).